The following is a 128-amino-acid chain: Leucine-rich single-pass membrane protein 1 (128 aa).

Position 24 is a phosphoserine (serine 24). The helical transmembrane segment at 66-86 threads the bilayer; that stretch reads GLLLVLTVSLALVFFAIFLII. The stretch at 90–111 forms a coiled coil; the sequence is NQMEDVSRRLTAEGKDIDDLKK.

The protein resides in the membrane. The chain is Leucine-rich single-pass membrane protein 1 (Lsmem1) from Mus musculus (Mouse).